The chain runs to 329 residues: Quinone-oxidoreductase QR1, chloroplastic (329 aa).

The protein belongs to the zinc-containing alcohol dehydrogenase family. Quinone oxidoreductase subfamily.

It localises to the plastid. Its subcellular location is the chloroplast outer membrane. It catalyses the reaction 2 a quinone + NADPH + H(+) = 2 a 1,4-benzosemiquinone + NADP(+). With respect to regulation, inhibited by dicumarol. NADPH-dependent single-electron reducing quinone reductase. Involved in haustorium initiation in parasitic plants through redox cycling of exogenous haustorium-inducing factors. Can use 9,10-phenanthrenequinone (PAQ), 1,2-naphthoquinone, 5-hydroxy-1,4-naphthoquinone (juglone) and 2,6-dimethoxy-p-benzoquinone (DMBQ) as substrates, but has no activity with menadione, diamide, 2,3-dimethoxy-5-methyl-1,4-benzoquinone or 1,4-naphthoquinone. The chain is Quinone-oxidoreductase QR1, chloroplastic from Triphysaria versicolor (Yellow owl's clover).